We begin with the raw amino-acid sequence, 90 residues long: Toxin 3FTx-Psa1 (90 aa).

A signal peptide spans methionine 1–threonine 21. 4 disulfides stabilise this stretch: cysteine 24–cysteine 43, cysteine 36–cysteine 61, cysteine 65–cysteine 76, and cysteine 77–cysteine 82.

Belongs to the three-finger toxin family. Ancestral subfamily. In terms of tissue distribution, expressed by the venom gland.

Its subcellular location is the secreted. The chain is Toxin 3FTx-Psa1 from Psammophis mossambicus (Olive sand snake).